A 355-amino-acid polypeptide reads, in one-letter code: Probable L-aspartate decarboxylase (355 aa).

K210 bears the N6-(pyridoxal phosphate)lysine mark.

Belongs to the group II decarboxylase family. MfnA subfamily. Pyridoxal 5'-phosphate serves as cofactor.

The enzyme catalyses L-aspartate + H(+) = beta-alanine + CO2. It participates in cofactor biosynthesis; coenzyme A biosynthesis. Its function is as follows. Catalyzes the decarboxylation of L-aspartate to produce beta-alanine. The chain is Probable L-aspartate decarboxylase from Halobacterium salinarum (strain ATCC 29341 / DSM 671 / R1).